We begin with the raw amino-acid sequence, 787 residues long: Serine/threonine-protein kinase PLK4 (787 aa).

Residues 14–268 (YEVQHLLGKG…LEQVLRHPFM (255 aa)) enclose the Protein kinase domain. ATP is bound by residues 20-28 (LGKGGFASV) and K43. Catalysis depends on D139, which acts as the Proton acceptor. The tract at residues 311-336 (SNESRSSQRLRSIEKSAQSSSNPQML) is disordered. The Cryptic POLO box 1 (CPB1) domain maps to 386 to 505 (EQQMRVPPLN…ARFVGLVKSK (120 aa)). The Cryptic POLO box 2 (CPB2) domain maps to 506 to 613 (TPKITYFSSL…GRRPLTDVSH (108 aa)). Positions 675–755 (PIKRINIPDV…IPQVKLRLKC (81 aa)) constitute a POLO box domain.

It belongs to the protein kinase superfamily. Ser/Thr protein kinase family. CDC5/Polo subfamily. As to quaternary structure, homodimer. Ubiquitinated by the SCF(Slimb) ubiquitin ligase complex; leading to its degradation by the proteasome during interphase and regulating centriole number and ensuring the block to centriole reduplication.

It localises to the cytoplasm. The protein localises to the cytoskeleton. It is found in the microtubule organizing center. Its subcellular location is the centrosome. The protein resides in the centriole. It catalyses the reaction L-seryl-[protein] + ATP = O-phospho-L-seryl-[protein] + ADP + H(+). The enzyme catalyses L-threonyl-[protein] + ATP = O-phospho-L-threonyl-[protein] + ADP + H(+). In terms of biological role, serine/threonine-protein kinase that plays a central role in centriole duplication. Able to trigger procentriole formation on the surface of the mother centriole cylinder, using mother centriole as a platform, leading to the recruitment of centriole biogenesis proteins such as sas-6. When overexpressed, it is able to induce centrosome amplification through the simultaneous generation of multiple procentrioles adjoining each parental centriole during S phase. Centrosome amplification following overexpression can initiate tumorigenesis, highlighting the importance of centrosome regulation in cancers. This chain is Serine/threonine-protein kinase PLK4 (SAK), found in Drosophila willistoni (Fruit fly).